Here is a 96-residue protein sequence, read N- to C-terminus: uncharacterized protein (96 aa).

Its subcellular location is the mitochondrion. This is an uncharacterized protein from Schizosaccharomyces pombe (strain 972 / ATCC 24843) (Fission yeast).